The sequence spans 375 residues: Erythronate-4-phosphate dehydrogenase (375 aa).

Substrate is bound by residues serine 45 and threonine 66. Residues aspartate 146, threonine 175, 206–208, and aspartate 232 each bind NAD(+); that span reads ASR. Arginine 208 is an active-site residue. Residue glutamate 237 is part of the active site. Residue histidine 254 is the Proton donor of the active site. Glycine 257 provides a ligand contact to NAD(+). Tyrosine 258 serves as a coordination point for substrate.

Belongs to the D-isomer specific 2-hydroxyacid dehydrogenase family. PdxB subfamily. Homodimer.

The protein localises to the cytoplasm. It catalyses the reaction 4-phospho-D-erythronate + NAD(+) = (R)-3-hydroxy-2-oxo-4-phosphooxybutanoate + NADH + H(+). It functions in the pathway cofactor biosynthesis; pyridoxine 5'-phosphate biosynthesis; pyridoxine 5'-phosphate from D-erythrose 4-phosphate: step 2/5. Its function is as follows. Catalyzes the oxidation of erythronate-4-phosphate to 3-hydroxy-2-oxo-4-phosphonooxybutanoate. The protein is Erythronate-4-phosphate dehydrogenase of Proteus mirabilis (strain HI4320).